A 446-amino-acid polypeptide reads, in one-letter code: Histidine--tRNA ligase (446 aa).

The protein belongs to the class-II aminoacyl-tRNA synthetase family. As to quaternary structure, homodimer.

The protein resides in the cytoplasm. The enzyme catalyses tRNA(His) + L-histidine + ATP = L-histidyl-tRNA(His) + AMP + diphosphate + H(+). This is Histidine--tRNA ligase from Burkholderia pseudomallei (strain 668).